Reading from the N-terminus, the 215-residue chain is Ion-translocating oxidoreductase complex subunit G (215 aa).

Residues 9 to 29 traverse the membrane as a helical segment; the sequence is GLLLSGFALICTAAVALVNEA. T176 carries the post-translational modification FMN phosphoryl threonine.

It belongs to the RnfG family. As to quaternary structure, the complex is composed of six subunits: RnfA, RnfB, RnfC, RnfD, RnfE and RnfG. The cofactor is FMN.

The protein resides in the cell inner membrane. Its function is as follows. Part of a membrane-bound complex that couples electron transfer with translocation of ions across the membrane. In Shewanella amazonensis (strain ATCC BAA-1098 / SB2B), this protein is Ion-translocating oxidoreductase complex subunit G.